A 394-amino-acid chain; its full sequence is Seipin (394 aa).

The Cytoplasmic portion of the chain corresponds to 1–27 (MVNDPPVPALLWAQEMGHVMAGRARKL). Residues 28 to 48 (LLQFGVFFCTILLLLWVSVFL) form a helical membrane-spanning segment. Residues 49–242 (YGSFYYSYMP…TCAFVGVASN (194 aa)) lie on the Lumenal side of the membrane. Asparagine 88 and asparagine 242 each carry an N-linked (GlcNAc...) asparagine glycan. Residues 243-263 (FTFLSVIVLFSYMQWVWGGIW) traverse the membrane as a helical segment. The Cytoplasmic segment spans residues 264–394 (PRQRLSLQVN…VRQRPICSSS (131 aa)). Residues 281–394 (RKDIQRKVSA…VRQRPICSSS (114 aa)) form a disordered region. Serine 289 is modified (phosphoserine). The segment covering 292-303 (QPGPQGQEESPQ) has biased composition (low complexity). Residues serine 346 and serine 351 each carry the phosphoserine modification.

It belongs to the seipin family. Undecamer (an oligomer having eleven subunits). Oligomerization is important for its function in lipid droplet formation. Interacts with LDAF1 to form an oligomeric complex. Interacts with RAB18. Interacts with ZFYVE1 in a RAB18-dependent manner.

Its subcellular location is the endoplasmic reticulum membrane. It localises to the lipid droplet. Plays a crucial role in the formation of lipid droplets (LDs) which are storage organelles at the center of lipid and energy homeostasis. In association with LDAF1, defines the sites of LD formation in the ER. Also required for growth and maturation of small nascent LDs into larger mature LDs. Mediates the formation and/or stabilization of endoplasmic reticulum-lipid droplets (ER-LD) contacts, facilitating protein and lipid delivery from the ER into growing LDs. Regulates the maturation of ZFYVE1-positive nascent LDs and the function of the RAB18-ZFYVE1 complex in mediating the formation of ER-LD contacts. Binds anionic phospholipids including phosphatidic acid. Plays an important role in the differentiation and development of adipocytes. The polypeptide is Seipin (Bos taurus (Bovine)).